The chain runs to 600 residues: UvrABC system protein C (600 aa).

In terms of domain architecture, GIY-YIG spans 15-92 (EKAGCYLMKD…IKKYQPYYNV (78 aa)). One can recognise a UVR domain in the interval 197–232 (QEVKKDLTNKMLQASADLEFERAGELRDQLKYIEET).

Belongs to the UvrC family. In terms of assembly, interacts with UvrB in an incision complex.

It is found in the cytoplasm. In terms of biological role, the UvrABC repair system catalyzes the recognition and processing of DNA lesions. UvrC both incises the 5' and 3' sides of the lesion. The N-terminal half is responsible for the 3' incision and the C-terminal half is responsible for the 5' incision. The protein is UvrABC system protein C of Lactobacillus delbrueckii subsp. bulgaricus (strain ATCC BAA-365 / Lb-18).